Consider the following 89-residue polypeptide: Small ribosomal subunit protein uS15 (89 aa).

This sequence belongs to the universal ribosomal protein uS15 family. Part of the 30S ribosomal subunit. Forms a bridge to the 50S subunit in the 70S ribosome, contacting the 23S rRNA.

Its function is as follows. One of the primary rRNA binding proteins, it binds directly to 16S rRNA where it helps nucleate assembly of the platform of the 30S subunit by binding and bridging several RNA helices of the 16S rRNA. Forms an intersubunit bridge (bridge B4) with the 23S rRNA of the 50S subunit in the ribosome. This chain is Small ribosomal subunit protein uS15, found in Acidiphilium cryptum (strain JF-5).